A 213-amino-acid polypeptide reads, in one-letter code: Methylthioribulose-1-phosphate dehydratase (213 aa).

Residues His-97 and His-99 each coordinate Zn(2+).

It belongs to the aldolase class II family. MtnB subfamily. In terms of assembly, homotetramer. The cofactor is Zn(2+).

It carries out the reaction 5-(methylsulfanyl)-D-ribulose 1-phosphate = 5-methylsulfanyl-2,3-dioxopentyl phosphate + H2O. The protein operates within amino-acid biosynthesis; L-methionine biosynthesis via salvage pathway; L-methionine from S-methyl-5-thio-alpha-D-ribose 1-phosphate: step 2/6. In terms of biological role, catalyzes the dehydration of methylthioribulose-1-phosphate (MTRu-1-P) into 2,3-diketo-5-methylthiopentyl-1-phosphate (DK-MTP-1-P). In Geobacillus sp. (strain WCH70), this protein is Methylthioribulose-1-phosphate dehydratase.